The following is a 245-amino-acid chain: DNA repair protein RecO (245 aa).

Belongs to the RecO family.

Its function is as follows. Involved in DNA repair and RecF pathway recombination. This chain is DNA repair protein RecO, found in Anaplasma phagocytophilum (strain HZ).